A 130-amino-acid chain; its full sequence is Small ribosomal subunit protein uS11c (130 aa).

This sequence belongs to the universal ribosomal protein uS11 family. In terms of assembly, part of the 30S ribosomal subunit.

The protein resides in the plastid. The protein localises to the chloroplast. The protein is Small ribosomal subunit protein uS11c of Tetradesmus obliquus (Green alga).